The primary structure comprises 226 residues: Thymidylate kinase (226 aa).

20-27 is a binding site for ATP; that stretch reads GGEGAGKS.

It belongs to the thymidylate kinase family.

It catalyses the reaction dTMP + ATP = dTDP + ADP. In terms of biological role, phosphorylation of dTMP to form dTDP in both de novo and salvage pathways of dTTP synthesis. In Bradyrhizobium sp. (strain BTAi1 / ATCC BAA-1182), this protein is Thymidylate kinase.